The chain runs to 167 residues: Translationally-controlled tumor protein homolog (167 aa).

A TCTP domain is found at 1 to 167; the sequence is MLIFEDVISG…WKHGVKENKI (167 aa).

This sequence belongs to the TCTP family.

The protein resides in the cytoplasm. The protein localises to the cytoskeleton. In terms of biological role, involved in protein synthesis. Involved in microtubule stabilization. The protein is Translationally-controlled tumor protein homolog (TMA19) of Candida albicans (strain SC5314 / ATCC MYA-2876) (Yeast).